Consider the following 294-residue polypeptide: Keratin-like protein KRT222 (294 aa).

Residues 1–150 (MELSQLLNEI…RLLEQEEIRY (150 aa)) form the IF rod domain. A coiled-coil region spans residues 1–151 (MELSQLLNEI…LLEQEEIRYY (151 aa)).

The protein belongs to the intermediate filament family.

The sequence is that of Keratin-like protein KRT222 (Krt222) from Mus musculus (Mouse).